A 42-amino-acid polypeptide reads, in one-letter code: uncharacterized protein (42 aa).

It is found in the cytoplasm. This is an uncharacterized protein from Escherichia coli (strain K12).